A 538-amino-acid chain; its full sequence is Reticuline oxidase (538 aa).

Residues 1 to 23 (MENKTPIFFSLSIFLSLLNCALG) form the signal peptide. Residues C30 and C89 are joined by a disulfide bond. A glycan (N-linked (GlcNAc...) asparagine) is linked at N38. Positions 67–241 (LISKPSAIIL…YAWKIKLLPV (175 aa)) constitute an FAD-binding PCMH-type domain. The segment at residues 104–166 (HSYEGLSYTS…SKLGFTAGWC (63 aa)) is a cross-link (6-(S-cysteinyl)-8alpha-(pros-histidyl)-FAD (His-Cys)). N-linked (GlcNAc...) asparagine glycosylation is found at N423 and N471.

This sequence belongs to the oxygen-dependent FAD-linked oxidoreductase family. FAD is required as a cofactor. The cofactor is a metal cation. The FAD cofactor is bound via a bicovalent 6-S-cysteinyl, 8alpha-N1-histidyl FAD linkage.

The protein localises to the cytoplasmic vesicle. It catalyses the reaction (S)-reticuline + O2 = (S)-scoulerine + H2O2 + H(+). It functions in the pathway alkaloid biosynthesis; (S)-scoulerine biosynthesis; (S)-scoulerine from (S)-reticuline: step 1/1. Functionally, essential to the formation of benzophenanthridine alkaloids in the response of plants to pathogenic attack. Catalyzes the stereospecific conversion of the N-methyl moiety of (S)-reticuline into the berberine bridge carbon of (S)-scoulerine. The chain is Reticuline oxidase (BBE1) from Eschscholzia californica (California poppy).